Consider the following 226-residue polypeptide: Thiopurine S-methyltransferase (226 aa).

Positions 10, 47, 68, and 130 each coordinate S-adenosyl-L-methionine.

This sequence belongs to the class I-like SAM-binding methyltransferase superfamily. TPMT family.

The protein localises to the cytoplasm. It carries out the reaction S-adenosyl-L-methionine + a thiopurine = S-adenosyl-L-homocysteine + a thiopurine S-methylether.. The sequence is that of Thiopurine S-methyltransferase from Shewanella sediminis (strain HAW-EB3).